The sequence spans 238 residues: Pyridoxine 5'-phosphate synthase (238 aa).

N6 contacts 3-amino-2-oxopropyl phosphate. 8–9 (DH) is a binding site for 1-deoxy-D-xylulose 5-phosphate. Residue R17 coordinates 3-amino-2-oxopropyl phosphate. H42 functions as the Proton acceptor in the catalytic mechanism. R44 and H49 together coordinate 1-deoxy-D-xylulose 5-phosphate. E69 acts as the Proton acceptor in catalysis. T99 lines the 1-deoxy-D-xylulose 5-phosphate pocket. H190 functions as the Proton donor in the catalytic mechanism. Residues G191 and 212–213 (GH) contribute to the 3-amino-2-oxopropyl phosphate site.

This sequence belongs to the PNP synthase family. Homooctamer; tetramer of dimers.

Its subcellular location is the cytoplasm. The enzyme catalyses 3-amino-2-oxopropyl phosphate + 1-deoxy-D-xylulose 5-phosphate = pyridoxine 5'-phosphate + phosphate + 2 H2O + H(+). The protein operates within cofactor biosynthesis; pyridoxine 5'-phosphate biosynthesis; pyridoxine 5'-phosphate from D-erythrose 4-phosphate: step 5/5. Functionally, catalyzes the complicated ring closure reaction between the two acyclic compounds 1-deoxy-D-xylulose-5-phosphate (DXP) and 3-amino-2-oxopropyl phosphate (1-amino-acetone-3-phosphate or AAP) to form pyridoxine 5'-phosphate (PNP) and inorganic phosphate. This Chlorobium phaeobacteroides (strain BS1) protein is Pyridoxine 5'-phosphate synthase.